A 293-amino-acid chain; its full sequence is Ribosomal protein L11 methyltransferase (293 aa).

S-adenosyl-L-methionine-binding residues include Thr145, Gly166, Asp188, and Asn230.

Belongs to the methyltransferase superfamily. PrmA family.

It localises to the cytoplasm. The catalysed reaction is L-lysyl-[protein] + 3 S-adenosyl-L-methionine = N(6),N(6),N(6)-trimethyl-L-lysyl-[protein] + 3 S-adenosyl-L-homocysteine + 3 H(+). Its function is as follows. Methylates ribosomal protein L11. This chain is Ribosomal protein L11 methyltransferase, found in Yersinia pseudotuberculosis serotype I (strain IP32953).